We begin with the raw amino-acid sequence, 244 residues long: rRNA adenine N-6-methyltransferase (244 aa).

Positions 11, 13, 38, 59, 84, and 101 each coordinate S-adenosyl-L-methionine.

This sequence belongs to the class I-like SAM-binding methyltransferase superfamily. rRNA adenine N(6)-methyltransferase family.

Its function is as follows. Involved in erythromycin resistance. This Lysinibacillus sphaericus (Bacillus sphaericus) protein is rRNA adenine N-6-methyltransferase (ermG).